Consider the following 424-residue polypeptide: MKLEMICTGEEVLAGQIVDTNAAWFASTMMEHGVEIQRRVTVGDRLEDLIAVFQERSLHADIILVNGGLGPTSDDMSALAMAKAKGEPLVENVEWRERLEEWFTRNNREMPLSNLKQAMLPASAVMVDNPVGTACGFRVKLNRAWLFFTPGVPFELKHMVTEQFVPFIRDEFNLDSKVALKKLLTIGQGESALADKLEPLELPEGITIGYRSSMPHIEIKIFARGEKAIAVLPRVAGHIKMVLGTAVVAEDKATLAEEIHYKLLNSGLTLSVAESCTGGMITSQLVDFSGSSSYLQHGLVTYSNESKVRVLGVNPSTLDDHGAVSIATVEEMAKGARQILDSDYALATSGIAGPDGGTDEKPVGTVAIALATRGGVYSQMIKLPRRSRDLVRSLSAAVAYDMLRRELLAEAVIVDYQSIGRFSK.

The protein belongs to the CinA family.

This is CinA-like protein from Shewanella baltica (strain OS195).